The primary structure comprises 124 residues: MSRALIKFIRLSPTKARLIAREVQGMNAELALASLKFMPNKGAKFIANAISSAVANGGFEANEVIVSSCRVDAGAVLKRFRPRARGSASRIRKPTSHILVEVSKAEVSAEKTTKAKKASVKKES.

Belongs to the universal ribosomal protein uL22 family. As to quaternary structure, part of the 50S ribosomal subunit.

This protein binds specifically to 23S rRNA; its binding is stimulated by other ribosomal proteins, e.g. L4, L17, and L20. It is important during the early stages of 50S assembly. It makes multiple contacts with different domains of the 23S rRNA in the assembled 50S subunit and ribosome. Functionally, the globular domain of the protein is located near the polypeptide exit tunnel on the outside of the subunit, while an extended beta-hairpin is found that lines the wall of the exit tunnel in the center of the 70S ribosome. The polypeptide is Large ribosomal subunit protein uL22 (Campylobacter lari (strain RM2100 / D67 / ATCC BAA-1060)).